Consider the following 492-residue polypeptide: Putative BTB/POZ domain and WD-repeat protein R786 (492 aa).

Residues 16 to 86 form the BTB domain; the sequence is TDVEIVLIDE…FYGQIVDSTN (71 aa). 2 WD repeats span residues 241 to 281 and 286 to 325; these read QSSC…IKIK and LINR…SKGI.

The protein belongs to the mimivirus BTB/WD family.

The protein is Putative BTB/POZ domain and WD-repeat protein R786 of Acanthamoeba polyphaga (Amoeba).